The following is a 134-amino-acid chain: Large ribosomal subunit protein bL20 (134 aa).

The protein belongs to the bacterial ribosomal protein bL20 family.

Binds directly to 23S ribosomal RNA and is necessary for the in vitro assembly process of the 50S ribosomal subunit. It is not involved in the protein synthesizing functions of that subunit. The polypeptide is Large ribosomal subunit protein bL20 (Rhizobium etli (strain CIAT 652)).